Consider the following 118-residue polypeptide: Small ribosomal subunit protein uS13 (118 aa).

Residues 94 to 118 (GLPLRGQRTRTNARTRKGPRKAIRK) are disordered.

Belongs to the universal ribosomal protein uS13 family. Part of the 30S ribosomal subunit. Forms a loose heterodimer with protein S19. Forms two bridges to the 50S subunit in the 70S ribosome.

Located at the top of the head of the 30S subunit, it contacts several helices of the 16S rRNA. In the 70S ribosome it contacts the 23S rRNA (bridge B1a) and protein L5 of the 50S subunit (bridge B1b), connecting the 2 subunits; these bridges are implicated in subunit movement. Contacts the tRNAs in the A and P-sites. In Xanthomonas axonopodis pv. citri (strain 306), this protein is Small ribosomal subunit protein uS13.